Consider the following 255-residue polypeptide: Type III pantothenate kinase (255 aa).

7-14 (DVGNTRLK) is a binding site for ATP. Residues Tyr-96 and 103–106 (GADR) contribute to the substrate site. Asp-105 functions as the Proton acceptor in the catalytic mechanism. Thr-133 serves as a coordination point for ATP. Thr-183 contributes to the substrate binding site.

This sequence belongs to the type III pantothenate kinase family. Homodimer. The cofactor is NH4(+). It depends on K(+) as a cofactor.

It localises to the cytoplasm. The catalysed reaction is (R)-pantothenate + ATP = (R)-4'-phosphopantothenate + ADP + H(+). It functions in the pathway cofactor biosynthesis; coenzyme A biosynthesis; CoA from (R)-pantothenate: step 1/5. Functionally, catalyzes the phosphorylation of pantothenate (Pan), the first step in CoA biosynthesis. The protein is Type III pantothenate kinase of Albidiferax ferrireducens (strain ATCC BAA-621 / DSM 15236 / T118) (Rhodoferax ferrireducens).